Reading from the N-terminus, the 514-residue chain is Developmental and secondary metabolism regulator veA (514 aa).

The region spanning 26 to 218 is the Velvet domain; it reads NRHLWYQLTV…ADQGCHVRIR (193 aa). The Nuclear localization signal motif lies at 40–45; that stretch reads ERARAC. Residues 219–463 are disordered; sequence RDVRMRKRDA…PIGSKRKHDQ (245 aa). A compositionally biased stretch (basic and acidic residues) spans 228–243; it reads AKSNNGRDRREDDMAR. Low complexity predominate over residues 256–267; it reads SAAARARSMSNS. Polar residues predominate over residues 386 to 396; that stretch reads SYPSTPVSSHP. Positions 411 to 448 are PEST; sequence KSPSNSVSPSNSSLKITDLLVQPLPSSEPKLEVGSAPC. Residues 412-423 show a composition bias toward low complexity; sequence SPSNSVSPSNSS.

It belongs to the velvet family. VeA subfamily. In terms of assembly, component of the heterotrimeric velvet complex composed of laeA, veA and velB; VeA acting as a bridging protein between laeA and velB.

The protein resides in the nucleus. It localises to the cytoplasm. Component of the velvet transcription factor complex that controls sexual/asexual developmental ratio in response to light, promoting sexual development in the darkness while stimulating asexual sporulation under illumination. The velvet complex hat acts as a global regulator for secondary metabolite gene expression. Controls the expression of the cephalosporin C gene cluster. Regulates hyphal fragmentation. The protein is Developmental and secondary metabolism regulator veA of Hapsidospora chrysogenum (strain ATCC 11550 / CBS 779.69 / DSM 880 / IAM 14645 / JCM 23072 / IMI 49137) (Acremonium chrysogenum).